The primary structure comprises 257 residues: Short chain dehydrogenase helC (257 aa).

An N-terminal signal peptide occupies residues 1–22; sequence MNTAIITGAAQGVGLCIAEALA. V13 serves as a coordination point for NADP(+). N46 carries an N-linked (GlcNAc...) asparagine glycan. NADP(+) is bound by residues D60 and N87. An N-linked (GlcNAc...) asparagine glycan is attached at N110. NADP(+)-binding residues include Y154, K158, I185, and T187. The active-site Proton acceptor is the Y154. The active-site Lowers pKa of active site Tyr is the K158.

The protein belongs to the short-chain dehydrogenases/reductases (SDR) family.

It functions in the pathway mycotoxin biosynthesis. In terms of biological role, short chain dehydrogenase; part of the gene cluster that mediates the biosynthesis of helvolic acid, an antibacterial nortriterpenoid. Protostadienol synthase helA cyclizes (3S)-oxidosqualene to (17Z)-protosta-17(20),24-dien-3-beta-ol (protostadienol). The synthesis of protostadienol is followed by several steps of monooxygenation, dehydrogenation, and acyl transfer to yield the final helvolic acid. Following the cyclization to the tetracyclic protostadienol by helA, cytochrome P450 monooxygenases helB1-mediated and helB2-mediated oxidation at C-4 and C-16, acyltransferase helD2-dependent acetylation of 16-OH, oxidation of C-21 by cytochrome P450 monooxygenase helB4, and short chain dehydrogenase helC-dependent oxidative decarboxylation yield the fusidane skeleton. This intermediate is further modified in three additional steps mediated by the cytochrome P450 monooxygenase helB3, the acyltransferase helD1, and the 3-ketosteroid 1-dehydrogenase helE to give helvolic acid. Compared with the late stages in the biosynthesis of helvolic acid, enzymes involved in the early stage modifications act in a relatively strict order. The hydroxylation of C-16 by helB1 and subsequent acetylation by helD2 should occur before the helB3-mediated oxidation of C-21. C-4 demethylation in fusidane-type antibiotics proceeds in an unusual manner though it is also achieved by oxidative decarboxylation. The methyl group at C-4 beta position is oxidized by helB1 and subsequently removed by the short chain dehydrogenase helC. In Aspergillus fumigatus (strain ATCC MYA-4609 / CBS 101355 / FGSC A1100 / Af293) (Neosartorya fumigata), this protein is Short chain dehydrogenase helC.